Here is a 114-residue protein sequence, read N- to C-terminus: uncharacterized protein (114 aa).

Residues 1–20 (MGLSRWHDKNSRPAEEKSEE) are compositionally biased toward basic and acidic residues. The tract at residues 1–22 (MGLSRWHDKNSRPAEEKSEEMQ) is disordered.

May be involved in phosphatase regulation and/or generation of precursor metabolites and energy. This is an uncharacterized protein from Saccharomyces cerevisiae (strain ATCC 204508 / S288c) (Baker's yeast).